We begin with the raw amino-acid sequence, 378 residues long: Flap endonuclease 1 (378 aa).

An N-domain region spans residues 1–102 (MGIHGLAKLI…GELAKRSERR (102 aa)). R19 carries the post-translational modification Symmetric dimethylarginine; by PRMT5. Residue D34 participates in Mg(2+) binding. 2 residues coordinate DNA: R47 and R69. K78 carries the post-translational modification N6-acetyllysine. Residue D84 participates in Mg(2+) binding. Residues R98 and R102 each carry the symmetric dimethylarginine; by PRMT5 modification. The interval 120-251 (EVEKFTKRLV…KRAVDLIQKH (132 aa)) is I-domain. Residues E156, E158, D177, and D179 each coordinate Mg(2+). E156 is a DNA binding site. Position 185 is a phosphoserine; by CDK2 (S185). Position 190 is a symmetric dimethylarginine; by PRMT5 (R190). S195 is subject to Phosphoserine. DNA is bound by residues G229 and D231. Mg(2+) is bound at residue D231. 3 positions are modified to phosphoserine: S253, S291, and S333. Positions 325 to 378 (RLSKSRQGSTQGRLDDFFKVTGSLSSAKRKEPEPKGPAKKKAKTGGAGKFRRGK) are disordered. The residue at position 334 (T334) is a Phosphothreonine. The interval 334–342 (TQGRLDDFF) is interaction with PCNA. N6-acetyllysine is present on residues K352, K373, and K378. Over residues 361–378 (PAKKKAKTGGAGKFRRGK) the composition is skewed to basic residues.

Belongs to the XPG/RAD2 endonuclease family. FEN1 subfamily. As to quaternary structure, interacts with PCNA. Three molecules of FEN1 bind to one PCNA trimer with each molecule binding to one PCNA monomer. PCNA stimulates the nuclease activity without altering cleavage specificity. The C-terminal domain binds EP300; can bind simultaneously to both PCNA and EP300. Interacts with DDX11; this interaction is direct and increases flap endonuclease activity of FEN1. Interacts with WDR4; regulating its endonuclease activity. Interacts with POLB. Mg(2+) is required as a cofactor. Post-translationally, acetylated by EP300. Acetylation inhibits both endonuclease and exonuclease activity. Acetylation also reduces DNA-binding activity but does not affect interaction with PCNA or EP300. Phosphorylation upon DNA damage induces relocalization to the nuclear plasma. Phosphorylation at Ser-185 by CDK2 occurs during late S-phase and results in dissociation from PCNA. In terms of processing, methylation at Arg-190 by PRMT5 impedes Ser-185 phosphorylation and increases interaction with PCNA.

Its subcellular location is the nucleus. The protein localises to the nucleolus. It is found in the nucleoplasm. The protein resides in the mitochondrion. Functionally, structure-specific nuclease with 5'-flap endonuclease and 5'-3' exonuclease activities involved in DNA replication and repair. During DNA replication, cleaves the 5'-overhanging flap structure that is generated by displacement synthesis when DNA polymerase encounters the 5'-end of a downstream Okazaki fragment. It enters the flap from the 5'-end and then tracks to cleave the flap base, leaving a nick for ligation. Also involved in the long patch base excision repair (LP-BER) pathway, by cleaving within the apurinic/apyrimidinic (AP) site-terminated flap. Acts as a genome stabilization factor that prevents flaps from equilibrating into structures that lead to duplications and deletions. Also possesses 5'-3' exonuclease activity on nicked or gapped double-stranded DNA, and exhibits RNase H activity. Also involved in replication and repair of rDNA and in repairing mitochondrial DNA. The chain is Flap endonuclease 1 from Mus musculus (Mouse).